We begin with the raw amino-acid sequence, 215 residues long: LysM and putative peptidoglycan-binding domain-containing protein 2 (215 aa).

Residues 1-40 (MADLSPAPALREGGPRAHRPSAPSPPPRSRSTSEPEEAEL) are disordered. Ala-2 carries the post-translational modification N-acetylalanine. 4 positions are modified to phosphoserine: Ser-5, Ser-24, Ser-33, and Ser-57. The region spanning 71–115 (VEHRVRAGDTLQGIALKYGVTMEQIKRANKLFTNDCIFLKKTLSI) is the LysM domain. 2 disordered regions span residues 135–176 (ESET…EVSA) and 195–215 (RKLKEESRDEESPYAASLYHS). Residues 145–156 (QEEEPVVSEEEL) are compositionally biased toward acidic residues. Over residues 157 to 169 (PPPSPQDPDPKPA) the composition is skewed to pro residues. A compositionally biased stretch (basic and acidic residues) spans 196–205 (KLKEESRDEE).

The polypeptide is LysM and putative peptidoglycan-binding domain-containing protein 2 (Lysmd2) (Mus musculus (Mouse)).